The sequence spans 213 residues: Probable thymidylate kinase 2 (213 aa).

Position 10 to 17 (10 to 17) interacts with ATP; the sequence is GIDGSGKS.

It belongs to the thymidylate kinase family.

It carries out the reaction dTMP + ATP = dTDP + ADP. The chain is Probable thymidylate kinase 2 (tmk2) from Saccharolobus solfataricus (strain ATCC 35092 / DSM 1617 / JCM 11322 / P2) (Sulfolobus solfataricus).